The chain runs to 157 residues: 2-C-methyl-D-erythritol 2,4-cyclodiphosphate synthase (157 aa).

2 residues coordinate a divalent metal cation: aspartate 8 and histidine 10. 4-CDP-2-C-methyl-D-erythritol 2-phosphate is bound by residues 8 to 10 and 34 to 35; these read DVH and HS. A divalent metal cation is bound at residue histidine 42. 4-CDP-2-C-methyl-D-erythritol 2-phosphate-binding positions include 56 to 58, 61 to 65, 132 to 135, phenylalanine 139, and arginine 142; these read DIG, FPDTD, and TTTE.

Belongs to the IspF family. In terms of assembly, homotrimer. Requires a divalent metal cation as cofactor.

The catalysed reaction is 4-CDP-2-C-methyl-D-erythritol 2-phosphate = 2-C-methyl-D-erythritol 2,4-cyclic diphosphate + CMP. The protein operates within isoprenoid biosynthesis; isopentenyl diphosphate biosynthesis via DXP pathway; isopentenyl diphosphate from 1-deoxy-D-xylulose 5-phosphate: step 4/6. Functionally, involved in the biosynthesis of isopentenyl diphosphate (IPP) and dimethylallyl diphosphate (DMAPP), two major building blocks of isoprenoid compounds. Catalyzes the conversion of 4-diphosphocytidyl-2-C-methyl-D-erythritol 2-phosphate (CDP-ME2P) to 2-C-methyl-D-erythritol 2,4-cyclodiphosphate (ME-CPP) with a corresponding release of cytidine 5-monophosphate (CMP). This is 2-C-methyl-D-erythritol 2,4-cyclodiphosphate synthase from Geobacter metallireducens (strain ATCC 53774 / DSM 7210 / GS-15).